A 446-amino-acid polypeptide reads, in one-letter code: N-succinylarginine dihydrolase (446 aa).

Residues 19–28 (SGLSYGNVAS), Asn110, and 137–138 (HR) contribute to the substrate site. Glu174 is an active-site residue. Residue Arg214 coordinates substrate. His250 is an active-site residue. Asp252 and Asn363 together coordinate substrate. Residue Cys369 is the Nucleophile of the active site.

It belongs to the succinylarginine dihydrolase family. In terms of assembly, homodimer.

It carries out the reaction N(2)-succinyl-L-arginine + 2 H2O + 2 H(+) = N(2)-succinyl-L-ornithine + 2 NH4(+) + CO2. Its pathway is amino-acid degradation; L-arginine degradation via AST pathway; L-glutamate and succinate from L-arginine: step 2/5. Catalyzes the hydrolysis of N(2)-succinylarginine into N(2)-succinylornithine, ammonia and CO(2). This is N-succinylarginine dihydrolase from Hahella chejuensis (strain KCTC 2396).